The chain runs to 440 residues: Mitochondrial translation factor 2 (440 aa).

The N-terminal 15 residues, 1–15 (MIRTSSILKNCNYRY), are a transit peptide targeting the mitochondrion.

It localises to the mitochondrion matrix. Functionally, required for the processing and/or for the stability of the CYTB and COX1 intron-containing pre-mRNAs and of the ATP6 transcript. Could be a stem-loop RNA-binding protein that plays a role in determining RNA stability. The protein is Mitochondrial translation factor 2 (MTF2) of Saccharomyces cerevisiae (strain ATCC 204508 / S288c) (Baker's yeast).